The sequence spans 115 residues: NADH-ubiquinone oxidoreductase chain 3 (115 aa).

3 helical membrane passes run 3 to 23, 55 to 75, and 84 to 104; these read LFVALFINASLSFILISVAFW, FFLVAITFLLFDLEIALLLPL, and LSAMMITSFILISILALGLIY.

Belongs to the complex I subunit 3 family. Core subunit of respiratory chain NADH dehydrogenase (Complex I) which is composed of 45 different subunits. Interacts with TMEM186. Interacts with TMEM242.

It is found in the mitochondrion inner membrane. It catalyses the reaction a ubiquinone + NADH + 5 H(+)(in) = a ubiquinol + NAD(+) + 4 H(+)(out). Core subunit of the mitochondrial membrane respiratory chain NADH dehydrogenase (Complex I) which catalyzes electron transfer from NADH through the respiratory chain, using ubiquinone as an electron acceptor. Essential for the catalytic activity of complex I. The sequence is that of NADH-ubiquinone oxidoreductase chain 3 from Sigmodon hispidus (Hispid cotton rat).